Here is a 209-residue protein sequence, read N- to C-terminus: Molybdenum cofactor guanylyltransferase (209 aa).

GTP contacts are provided by residues 13–15, Lys-26, Asn-54, Asp-74, and Asp-104; that span reads LAG. Mg(2+) is bound at residue Asp-104.

Belongs to the MobA family. In terms of assembly, monomer. Mg(2+) is required as a cofactor.

It localises to the cytoplasm. It catalyses the reaction Mo-molybdopterin + GTP + H(+) = Mo-molybdopterin guanine dinucleotide + diphosphate. Functionally, transfers a GMP moiety from GTP to Mo-molybdopterin (Mo-MPT) cofactor (Moco or molybdenum cofactor) to form Mo-molybdopterin guanine dinucleotide (Mo-MGD) cofactor. The polypeptide is Molybdenum cofactor guanylyltransferase (Acinetobacter baumannii (strain ATCC 17978 / DSM 105126 / CIP 53.77 / LMG 1025 / NCDC KC755 / 5377)).